A 147-amino-acid chain; its full sequence is Putative pre-16S rRNA nuclease (147 aa).

The protein belongs to the YqgF nuclease family.

The protein localises to the cytoplasm. Functionally, could be a nuclease involved in processing of the 5'-end of pre-16S rRNA. The polypeptide is Putative pre-16S rRNA nuclease (Acinetobacter baylyi (strain ATCC 33305 / BD413 / ADP1)).